A 400-amino-acid chain; its full sequence is Probable peptidoglycan D,D-transpeptidase PenA (400 aa).

Residues Asn1–Glu21 are disordered. The Acyl-ester intermediate role is filled by Ser128.

It belongs to the transpeptidase family. FtsI subfamily.

It is found in the cell inner membrane. It carries out the reaction Preferential cleavage: (Ac)2-L-Lys-D-Ala-|-D-Ala. Also transpeptidation of peptidyl-alanyl moieties that are N-acyl substituents of D-alanine.. Its pathway is cell wall biogenesis; peptidoglycan biosynthesis. Its function is as follows. Catalyzes cross-linking of the peptidoglycan cell wall at the division septum. This chain is Probable peptidoglycan D,D-transpeptidase PenA, found in Neisseria flavescens.